The sequence spans 282 residues: Probable protein phosphatase 2C 10 (282 aa).

The 248-residue stretch at 34 to 281 (KFGYSLVKGK…DDISCIVVRL (248 aa)) folds into the PPM-type phosphatase domain. Mn(2+) is bound by residues D71, G72, D233, and D272.

Belongs to the PP2C family. The cofactor is Mg(2+). Mn(2+) serves as cofactor.

It catalyses the reaction O-phospho-L-seryl-[protein] + H2O = L-seryl-[protein] + phosphate. The enzyme catalyses O-phospho-L-threonyl-[protein] + H2O = L-threonyl-[protein] + phosphate. In Arabidopsis thaliana (Mouse-ear cress), this protein is Probable protein phosphatase 2C 10.